A 345-amino-acid chain; its full sequence is MVDVNRLKEEVIASYREICKENYRLLVFIVGPPGSGKSTIAEKLKDAINTSYLDYLKEIDRKTLRCENYNHINIDQFVQGIEGETISSALEDERHENFDSVENVDFICKKKRLKDGSYTITGRGGQLNAIKVRQPTSQEKNLEGNTTIAEVLPMDGFHLSRECLDHFSDPQWAHLRRGSSLTFDSNNFLKLCEIMAKTSRIFPSIGYDGDDFTAFDAISSSFDCSVPSVEVPGFDHSLKDPQPSQHTISFKSRIVIFEGLYLLYNKENWSKIYNIVSNSNAKLFYKILACEDQIESRVAKRHLKAGLVASIEDGKDKFRKNDLLNARDVEKNSISSEDIRLIRND.

ATP is bound at residue 31–39 (GPPGSGKST).

This sequence belongs to the YFH7 family.

Its function is as follows. ATP-dependent kinase that could be involved in endoplasmic reticulum membrane assembly. In Candida glabrata (strain ATCC 2001 / BCRC 20586 / JCM 3761 / NBRC 0622 / NRRL Y-65 / CBS 138) (Yeast), this protein is ATP-dependent kinase YFH7 (YFH7).